A 436-amino-acid polypeptide reads, in one-letter code: Histidine--tRNA ligase (436 aa).

Belongs to the class-II aminoacyl-tRNA synthetase family.

The protein resides in the cytoplasm. It carries out the reaction tRNA(His) + L-histidine + ATP = L-histidyl-tRNA(His) + AMP + diphosphate + H(+). This Thermococcus kodakarensis (strain ATCC BAA-918 / JCM 12380 / KOD1) (Pyrococcus kodakaraensis (strain KOD1)) protein is Histidine--tRNA ligase.